The following is a 439-amino-acid chain: tRNA-2-methylthio-N(6)-dimethylallyladenosine synthase (439 aa).

An MTTase N-terminal domain is found at 2–116 (LKVYIETMGC…ISQVIHKEKA (115 aa)). Residues Cys-11, Cys-47, Cys-79, Cys-149, Cys-153, and Cys-156 each coordinate [4Fe-4S] cluster. The region spanning 135-368 (KKAEVRSLLN…QNRHKEILEE (234 aa)) is the Radical SAM core domain. The TRAM domain maps to 371 to 437 (RLEVGKTHVV…KGRLMATTKN (67 aa)).

This sequence belongs to the methylthiotransferase family. MiaB subfamily. Monomer. [4Fe-4S] cluster serves as cofactor.

The protein localises to the cytoplasm. The enzyme catalyses N(6)-dimethylallyladenosine(37) in tRNA + (sulfur carrier)-SH + AH2 + 2 S-adenosyl-L-methionine = 2-methylsulfanyl-N(6)-dimethylallyladenosine(37) in tRNA + (sulfur carrier)-H + 5'-deoxyadenosine + L-methionine + A + S-adenosyl-L-homocysteine + 2 H(+). Catalyzes the methylthiolation of N6-(dimethylallyl)adenosine (i(6)A), leading to the formation of 2-methylthio-N6-(dimethylallyl)adenosine (ms(2)i(6)A) at position 37 in tRNAs that read codons beginning with uridine. This is tRNA-2-methylthio-N(6)-dimethylallyladenosine synthase from Helicobacter acinonychis (strain Sheeba).